Here is a 148-residue protein sequence, read N- to C-terminus: Cdc42 effector protein 5 (148 aa).

Disordered regions lie at residues 1 to 89 and 111 to 148; these read MPVL…DPLL and RPEAAAAKPDAEPRPGTQPPQARCRPNADLELNDVIGL. Residues 23–37 enclose the CRIB domain; sequence ISAPLGDFRHTLHVG. Residue Arg-38 is modified to Omega-N-methylarginine. Residues 55–76 show a composition bias toward pro residues; it reads GPPPEPRAPPAGAPRSPPPPAV. Residues 77–87 show a composition bias toward low complexity; the sequence is PQSAAPSPADP.

This sequence belongs to the BORG/CEP family. As to quaternary structure, interacts with CDC42, in a GTP-dependent manner, and with SEPT7.

The protein localises to the endomembrane system. Its subcellular location is the cytoplasm. It localises to the cytoskeleton. Functionally, probably involved in the organization of the actin cytoskeleton. May act downstream of CDC42 to induce actin filament assembly leading to cell shape changes. Induces pseudopodia formation in fibroblasts. Inhibits MAPK8 independently of CDC42 binding. Controls septin organization and this effect is negatively regulated by CDC42. This chain is Cdc42 effector protein 5 (CDC42EP5), found in Homo sapiens (Human).